The primary structure comprises 141 residues: Hemoglobin subunit beta-C(NA) (141 aa).

A Globin domain is found at 1-141 (PBKALITGFW…VASALAHRYH (141 aa)). 2 residues coordinate heme b: H58 and H87.

This sequence belongs to the globin family. As to quaternary structure, heterotetramer of two alpha chains and two beta chains. As to expression, red blood cells.

Its function is as follows. Involved in oxygen transport from the lung to the various peripheral tissues. In Ammotragus lervia (Barbary sheep), this protein is Hemoglobin subunit beta-C(NA).